The following is a 196-amino-acid chain: ATP-dependent Clp protease proteolytic subunit (196 aa).

Serine 96 acts as the Nucleophile in catalysis. Histidine 121 is a catalytic residue.

The protein belongs to the peptidase S14 family. As to quaternary structure, fourteen ClpP subunits assemble into 2 heptameric rings which stack back to back to give a disk-like structure with a central cavity, resembling the structure of eukaryotic proteasomes.

The protein resides in the cytoplasm. It carries out the reaction Hydrolysis of proteins to small peptides in the presence of ATP and magnesium. alpha-casein is the usual test substrate. In the absence of ATP, only oligopeptides shorter than five residues are hydrolyzed (such as succinyl-Leu-Tyr-|-NHMec, and Leu-Tyr-Leu-|-Tyr-Trp, in which cleavage of the -Tyr-|-Leu- and -Tyr-|-Trp bonds also occurs).. Its function is as follows. Cleaves peptides in various proteins in a process that requires ATP hydrolysis. Has a chymotrypsin-like activity. Plays a major role in the degradation of misfolded proteins. This Streptococcus pyogenes serotype M3 (strain SSI-1) protein is ATP-dependent Clp protease proteolytic subunit.